The primary structure comprises 258 residues: MSARFGPEDLLACYRRGVFPMADSRDDPRLFLVDPDFRGILPLDAFHIPKRLKRRVCQDPYRVSFDTAFTRVVEACGEPHDNRPNTWINSPIVNLYSALHRQGFAHSVECWDGDQLVGGLYGVSLGGAFFGESMFSRATDASKIALVHLAARLIDRGYVLLDAQFHNPHLTQFGLIEISRDAFKARLKAALKVGADFHGGSDGPAPDQSIGMSSSGGVSDSVTPAGMSSYSGSSLSGMIARSGSFTGSGAVQRITQMS.

Residues 199–220 form a disordered region; sequence GGSDGPAPDQSIGMSSSGGVSD. Positions 209–220 are enriched in low complexity; sequence SIGMSSSGGVSD.

This sequence belongs to the L/F-transferase family.

It is found in the cytoplasm. It catalyses the reaction N-terminal L-lysyl-[protein] + L-leucyl-tRNA(Leu) = N-terminal L-leucyl-L-lysyl-[protein] + tRNA(Leu) + H(+). The catalysed reaction is N-terminal L-arginyl-[protein] + L-leucyl-tRNA(Leu) = N-terminal L-leucyl-L-arginyl-[protein] + tRNA(Leu) + H(+). It carries out the reaction L-phenylalanyl-tRNA(Phe) + an N-terminal L-alpha-aminoacyl-[protein] = an N-terminal L-phenylalanyl-L-alpha-aminoacyl-[protein] + tRNA(Phe). Functions in the N-end rule pathway of protein degradation where it conjugates Leu, Phe and, less efficiently, Met from aminoacyl-tRNAs to the N-termini of proteins containing an N-terminal arginine or lysine. This is Leucyl/phenylalanyl-tRNA--protein transferase from Hyphomonas neptunium (strain ATCC 15444).